The primary structure comprises 1191 residues: DNA-directed RNA polymerase subunit beta (1191 aa).

The disordered stretch occupies residues 1164 to 1191 (EEEDLQPADALNIAPQPDTEEEPVESFE). Acidic residues predominate over residues 1181–1191 (DTEEEPVESFE).

It belongs to the RNA polymerase beta chain family. As to quaternary structure, the RNAP catalytic core consists of 2 alpha, 1 beta, 1 beta' and 1 omega subunit. When a sigma factor is associated with the core the holoenzyme is formed, which can initiate transcription.

It catalyses the reaction RNA(n) + a ribonucleoside 5'-triphosphate = RNA(n+1) + diphosphate. DNA-dependent RNA polymerase catalyzes the transcription of DNA into RNA using the four ribonucleoside triphosphates as substrates. This is DNA-directed RNA polymerase subunit beta from Lysinibacillus sphaericus (strain C3-41).